A 324-amino-acid chain; its full sequence is Polyphosphate glucokinase (324 aa).

Residues 53-79 (TSTDATADTPRTSPPSDTAGTTSRHRG) are disordered. Over residues 62–74 (PRTSPPSDTAGTT) the composition is skewed to polar residues. 83–88 (DIGGSS) serves as a coordination point for ATP.

This sequence belongs to the ROK (NagC/XylR) family. Homodimer.

It catalyses the reaction [phosphate](n) + D-glucose = [phosphate](n-1) + D-glucose 6-phosphate + H(+). It carries out the reaction D-glucose + ATP = D-glucose 6-phosphate + ADP + H(+). In terms of biological role, catalyzes the phosphorylation of glucose using polyphosphate or ATP as the phosphoryl donor. The protein is Polyphosphate glucokinase (ppgK) of Mycobacterium leprae (strain TN).